We begin with the raw amino-acid sequence, 257 residues long: BTB/POZ domain-containing protein KCTD1 (257 aa).

Residues Met-1–Leu-25 are disordered. A phosphoserine mark is found at Ser-9 and Ser-12. Residues Ser-9–Leu-25 show a composition bias toward polar residues. The 71-residue stretch at Ala-30–Asp-100 folds into the BTB domain.

Forms homopentamers. Interacts with KCTD15, probably forming heteropentamers depending on its abundance in a cell-type dependent manner. Interacts with TFAP2A, TFAP2B and TFAP2C via the BTB domain. In terms of processing, sumoylated.

It localises to the nucleus. May repress the transcriptional activity of AP-2 family members, including TFAP2A, TFAP2B and TFAP2C to various extent. The sequence is that of BTB/POZ domain-containing protein KCTD1 (KCTD1) from Bos taurus (Bovine).